The sequence spans 638 residues: Phosphomethylpyrimidine synthase (638 aa).

Substrate is bound by residues Asn-236, Met-265, Tyr-294, His-330, 350-352 (SRG), 391-394 (DGLR), and Glu-430. His-434 serves as a coordination point for Zn(2+). Tyr-457 is a substrate binding site. His-498 is a binding site for Zn(2+). 3 residues coordinate [4Fe-4S] cluster: Cys-578, Cys-581, and Cys-586. The segment covering 608-624 (AEGASQQEAEQGMQEMS) has biased composition (low complexity). The disordered stretch occupies residues 608–633 (AEGASQQEAEQGMQEMSQKYKDAGRR).

Belongs to the ThiC family. Homodimer. The cofactor is [4Fe-4S] cluster.

It catalyses the reaction 5-amino-1-(5-phospho-beta-D-ribosyl)imidazole + S-adenosyl-L-methionine = 4-amino-2-methyl-5-(phosphooxymethyl)pyrimidine + CO + 5'-deoxyadenosine + formate + L-methionine + 3 H(+). It functions in the pathway cofactor biosynthesis; thiamine diphosphate biosynthesis. Its function is as follows. Catalyzes the synthesis of the hydroxymethylpyrimidine phosphate (HMP-P) moiety of thiamine from aminoimidazole ribotide (AIR) in a radical S-adenosyl-L-methionine (SAM)-dependent reaction. This is Phosphomethylpyrimidine synthase from Hahella chejuensis (strain KCTC 2396).